A 244-amino-acid chain; its full sequence is MKRFAIEFSYDGTNFFGYQGQPNVRTVQGELEKALERIFKERIFTQGAGRTDAGVHANGQVAAFNCPIDRLAAIDIKNALNANLPEDIYVKKAWEVEKNFNPRFRAKKRIYHYLVSTNEKDVFKRNYVWHFKYKLNIEAMRIAARYLEGEHDFSSFKKGNDKKNPIRTVYRIRILNVKKELILIRVEGRSFLRSMVRNIVGSLVRVGLGQWTPEKIKKVLEARSRQEAAGTAPPHGLYLYKVLF.

The active-site Nucleophile is the D52. Residue Y111 participates in substrate binding.

The protein belongs to the tRNA pseudouridine synthase TruA family. In terms of assembly, homodimer.

The enzyme catalyses uridine(38/39/40) in tRNA = pseudouridine(38/39/40) in tRNA. Functionally, formation of pseudouridine at positions 38, 39 and 40 in the anticodon stem and loop of transfer RNAs. The chain is tRNA pseudouridine synthase A from Thermosipho melanesiensis (strain DSM 12029 / CIP 104789 / BI429).